The primary structure comprises 245 residues: 14-3-3 protein zeta (245 aa).

The protein belongs to the 14-3-3 family. Homodimer.

The protein localises to the cytoplasm. Its function is as follows. Adapter protein implicated in the regulation of a large spectrum of both general and specialized signaling pathways. Binds to a large number of partners, usually by recognition of a phosphoserine or phosphothreonine motif. Binding generally results in the modulation of the activity of the binding partner. This is 14-3-3 protein zeta (ywhaz) from Xenopus tropicalis (Western clawed frog).